The primary structure comprises 158 residues: Ribosome maturation factor RimP (158 aa).

This sequence belongs to the RimP family.

It localises to the cytoplasm. Required for maturation of 30S ribosomal subunits. The polypeptide is Ribosome maturation factor RimP (Lactobacillus helveticus (strain DPC 4571)).